The chain runs to 209 residues: Ribosomal RNA large subunit methyltransferase E (209 aa).

Residues Gly63, Trp65, Asp83, Asp99, and Asp124 each contribute to the S-adenosyl-L-methionine site. Lys164 functions as the Proton acceptor in the catalytic mechanism.

Belongs to the class I-like SAM-binding methyltransferase superfamily. RNA methyltransferase RlmE family.

The protein resides in the cytoplasm. It carries out the reaction uridine(2552) in 23S rRNA + S-adenosyl-L-methionine = 2'-O-methyluridine(2552) in 23S rRNA + S-adenosyl-L-homocysteine + H(+). In terms of biological role, specifically methylates the uridine in position 2552 of 23S rRNA at the 2'-O position of the ribose in the fully assembled 50S ribosomal subunit. The sequence is that of Ribosomal RNA large subunit methyltransferase E from Aliivibrio salmonicida (strain LFI1238) (Vibrio salmonicida (strain LFI1238)).